A 464-amino-acid polypeptide reads, in one-letter code: Citrate synthase, mitochondrial (464 aa).

The transit peptide at 1-27 (MALLTAATRLLGAKNSSCLVLAARHAS) directs the protein to the mitochondrion. Positions 2–21 (ALLTAATRLLGAKNSSCLVL) match the SIFI-degron motif. Lys-57 carries the N6-succinyllysine modification. An N6-acetyllysine; alternate modification is found at Lys-76. Lys-76 carries the post-translational modification N6-succinyllysine; alternate. An N6-succinyllysine mark is found at Lys-103 and Lys-193. The residue at position 226 (Ser-226) is a Phosphoserine. His-301 is an active-site residue. N6-acetyllysine; alternate occurs at positions 321 and 327. 2 positions are modified to N6-succinyllysine; alternate: Lys-321 and Lys-327. The active site involves His-347. Residue Arg-356 participates in oxaloacetate binding. Lys-375 is subject to N6-acetyllysine; alternate. At Lys-375 the chain carries N6-succinyllysine; alternate. Lys-382 is modified (N6-acetyllysine). At Lys-393 the chain carries N6-acetyllysine; alternate. Lys-393 carries the post-translational modification N6-succinyllysine; alternate. N6,N6,N6-trimethyllysine is present on Lys-395. Residue Asp-402 is part of the active site. Positions 428 and 448 each coordinate oxaloacetate. N6-succinyllysine is present on Lys-450. Lys-459 carries the N6-acetyllysine; alternate modification. Lys-459 is subject to N6-succinyllysine; alternate.

This sequence belongs to the citrate synthase family. As to quaternary structure, homodimer. In terms of processing, methylated. Trimethylation at Lys-395 by CSKMT decreases citrate synthase activity. In response to mitochondrial stress, the precursor protein is ubiquitinated by the SIFI complex in the cytoplasm before mitochondrial import, leading to its degradation. Within the SIFI complex, UBR4 initiates ubiquitin chain that are further elongated or branched by KCMF1.

The protein localises to the mitochondrion matrix. The enzyme catalyses oxaloacetate + acetyl-CoA + H2O = citrate + CoA + H(+). Its pathway is carbohydrate metabolism; tricarboxylic acid cycle; isocitrate from oxaloacetate: step 1/2. Key enzyme of the Krebs tricarboxylic acid cycle which catalyzes the synthesis of citrate from acetyl coenzyme A and oxaloacetate. The sequence is that of Citrate synthase, mitochondrial (Cs) from Mus musculus (Mouse).